The chain runs to 219 residues: Ribosome hibernation promotion factor (219 aa).

This sequence belongs to the HPF/YfiA ribosome-associated protein family. Long HPF subfamily. As to quaternary structure, interacts with 100S ribosomes.

The protein localises to the cytoplasm. Required for dimerization of active 70S ribosomes into 100S ribosomes in stationary phase; 100S ribosomes are translationally inactive and sometimes present during exponential growth. In Mycobacterium tuberculosis (strain ATCC 25618 / H37Rv), this protein is Ribosome hibernation promotion factor.